We begin with the raw amino-acid sequence, 217 residues long: Large ribosomal subunit protein eL6 (217 aa).

This sequence belongs to the eukaryotic ribosomal protein eL6 family. As to quaternary structure, component of the large ribosomal subunit. May bind IPO9 with low affinity.

Its subcellular location is the cytoplasm. It localises to the cytosol. The protein localises to the rough endoplasmic reticulum. Functionally, component of the large ribosomal subunit. In Caenorhabditis elegans, this protein is Large ribosomal subunit protein eL6 (rpl-6).